Here is a 614-residue protein sequence, read N- to C-terminus: Chaperone protein DnaK (614 aa).

A Phosphothreonine; by autocatalysis modification is found at T174. The tract at residues 576-614 (QTGGAAPGPDMGADPGAGGAQGDDNVVDAEYTEVDKDQK) is disordered. Low complexity predominate over residues 578–589 (GGAAPGPDMGAD).

It belongs to the heat shock protein 70 family.

Its function is as follows. Acts as a chaperone. The polypeptide is Chaperone protein DnaK (Desulfitobacterium hafniense (strain DSM 10664 / DCB-2)).